Reading from the N-terminus, the 201-residue chain is Cytochrome c oxidase subunit 3 (201 aa).

Helical transmembrane passes span 25–45 (VLGL…LFAA), 65–85 (LFVP…IHYG), 100–120 (WYWI…YEYL), and 137–157 (VMTG…LGVI).

It belongs to the cytochrome c oxidase subunit 3 family.

It localises to the cell membrane. The catalysed reaction is 4 Fe(II)-[cytochrome c] + O2 + 8 H(+)(in) = 4 Fe(III)-[cytochrome c] + 2 H2O + 4 H(+)(out). The polypeptide is Cytochrome c oxidase subunit 3 (ctaE) (Thermostichus vulcanus (Synechococcus vulcanus)).